A 301-amino-acid polypeptide reads, in one-letter code: CRISPR-associated endonuclease Cas1 (301 aa).

3 residues coordinate Mn(2+): Glu133, His200, and Asp213.

Belongs to the CRISPR-associated endonuclease Cas1 family. As to quaternary structure, homodimer, forms a heterotetramer with a Cas2 homodimer. The cofactor is Mg(2+). Requires Mn(2+) as cofactor.

Functionally, CRISPR (clustered regularly interspaced short palindromic repeat), is an adaptive immune system that provides protection against mobile genetic elements (viruses, transposable elements and conjugative plasmids). CRISPR clusters contain spacers, sequences complementary to antecedent mobile elements, and target invading nucleic acids. CRISPR clusters are transcribed and processed into CRISPR RNA (crRNA). Acts as a dsDNA endonuclease. Involved in the integration of spacer DNA into the CRISPR cassette. The sequence is that of CRISPR-associated endonuclease Cas1 from Clostridium sp. (strain SY8519).